Consider the following 560-residue polypeptide: Membrane protein insertase YidC (560 aa).

Residues Met-1–Leu-21 form a helical membrane-spanning segment. The disordered stretch occupies residues Val-42–Ala-66. Transmembrane regions (helical) follow at residues Leu-341 to Leu-361, Leu-367 to Phe-387, Leu-437 to Leu-457, Trp-468 to Met-488, and Pro-515 to Val-535.

This sequence belongs to the OXA1/ALB3/YidC family. Type 1 subfamily. As to quaternary structure, interacts with the Sec translocase complex via SecD. Specifically interacts with transmembrane segments of nascent integral membrane proteins during membrane integration.

The protein resides in the cell inner membrane. In terms of biological role, required for the insertion and/or proper folding and/or complex formation of integral membrane proteins into the membrane. Involved in integration of membrane proteins that insert both dependently and independently of the Sec translocase complex, as well as at least some lipoproteins. Aids folding of multispanning membrane proteins. In Pseudomonas putida (strain ATCC 700007 / DSM 6899 / JCM 31910 / BCRC 17059 / LMG 24140 / F1), this protein is Membrane protein insertase YidC.